The sequence spans 124 residues: Putative C(50) carotenoid beta-cyclase subunit A (124 aa).

The next 3 helical transmembrane spans lie at 1-21 (MIGL…LVID), 34-54 (AAAL…VLGV), and 78-98 (FEEV…AAGV).

The protein belongs to the lycopene beta-cyclase family. May form a complex with LbtBC.

It is found in the cell membrane. It participates in carotenoid biosynthesis. Functionally, involved in the biosynthesis of C(50) beta-cyclic carotenoids. May have C(50) carotenoid beta-cyclase activity and produce the C(50) beta-cyclic carotenoid C.p.450 from the C(50) carotenoid dihydrobisanhydrobacterioruberin (DH-BABR). The polypeptide is Putative C(50) carotenoid beta-cyclase subunit A (Dietzia sp. (strain CQ4)).